Reading from the N-terminus, the 270-residue chain is Mlc titration factor A (270 aa).

Positions 111, 148, 152, and 211 each coordinate Zn(2+).

The protein belongs to the MtfA family. As to quaternary structure, interacts with Mlc. Zn(2+) is required as a cofactor.

The protein resides in the cytoplasm. Its function is as follows. Involved in the modulation of the activity of the glucose-phosphotransferase system (glucose-PTS). Interacts with the transcriptional repressor Mlc, preventing its interaction with DNA and leading to the modulation of expression of genes regulated by Mlc, including ptsG, which encodes the PTS system glucose-specific EIICB component. In terms of biological role, shows zinc-dependent metallopeptidase activity. The polypeptide is Mlc titration factor A (Yersinia pestis bv. Antiqua (strain Nepal516)).